A 51-amino-acid chain; its full sequence is Large ribosomal subunit protein eL39 (51 aa).

Belongs to the eukaryotic ribosomal protein eL39 family. In terms of assembly, part of the 50S ribosomal subunit.

This chain is Large ribosomal subunit protein eL39, found in Pyrococcus furiosus (strain ATCC 43587 / DSM 3638 / JCM 8422 / Vc1).